A 306-amino-acid polypeptide reads, in one-letter code: Dermonecrotic toxin LarSicTox-alphaIB1ai (306 aa).

Valine 1 is a signal peptide. Residues 2–27 (RATEKFASMYFFCHSPQSAETDVAER) constitute a propeptide that is removed on maturation. Histidine 38 is a catalytic residue. Mg(2+) is bound by residues glutamate 58 and aspartate 60. The active-site Nucleophile is histidine 74. 2 disulfide bridges follow: cysteine 78-cysteine 84 and cysteine 80-cysteine 223. Aspartate 118 provides a ligand contact to Mg(2+). N-linked (GlcNAc...) asparagine glycosylation is present at asparagine 283.

This sequence belongs to the arthropod phospholipase D family. Class II subfamily. The cofactor is Mg(2+). Expressed by the venom gland.

The protein resides in the secreted. It carries out the reaction an N-(acyl)-sphingosylphosphocholine = an N-(acyl)-sphingosyl-1,3-cyclic phosphate + choline. It catalyses the reaction an N-(acyl)-sphingosylphosphoethanolamine = an N-(acyl)-sphingosyl-1,3-cyclic phosphate + ethanolamine. The catalysed reaction is a 1-acyl-sn-glycero-3-phosphocholine = a 1-acyl-sn-glycero-2,3-cyclic phosphate + choline. The enzyme catalyses a 1-acyl-sn-glycero-3-phosphoethanolamine = a 1-acyl-sn-glycero-2,3-cyclic phosphate + ethanolamine. Dermonecrotic toxins cleave the phosphodiester linkage between the phosphate and headgroup of certain phospholipids (sphingolipid and lysolipid substrates), forming an alcohol (often choline) and a cyclic phosphate. This toxin acts on sphingomyelin (SM). It may also act on ceramide phosphoethanolamine (CPE), lysophosphatidylcholine (LPC) and lysophosphatidylethanolamine (LPE), but not on lysophosphatidylserine (LPS), and lysophosphatidylglycerol (LPG). It acts by transphosphatidylation, releasing exclusively cyclic phosphate products as second products. Induces dermonecrosis, hemolysis, increased vascular permeability, edema, inflammatory response, and platelet aggregation. This Loxosceles arizonica (Arizona brown spider) protein is Dermonecrotic toxin LarSicTox-alphaIB1ai.